The primary structure comprises 609 residues: tRNA uridine 5-carboxymethylaminomethyl modification enzyme MnmG (609 aa).

Residues 11-16 (GAGHAG), Val123, and Thr178 each bind FAD. 270-284 (GPRYCPSIEDKVVRF) lines the NAD(+) pocket. FAD is bound at residue Gln367.

The protein belongs to the MnmG family. Homodimer. Heterotetramer of two MnmE and two MnmG subunits. FAD serves as cofactor.

The protein localises to the cytoplasm. In terms of biological role, NAD-binding protein involved in the addition of a carboxymethylaminomethyl (cmnm) group at the wobble position (U34) of certain tRNAs, forming tRNA-cmnm(5)s(2)U34. This chain is tRNA uridine 5-carboxymethylaminomethyl modification enzyme MnmG, found in Mycoplasmopsis synoviae (strain 53) (Mycoplasma synoviae).